An 860-amino-acid polypeptide reads, in one-letter code: Alanine--tRNA ligase (860 aa).

Residues H563, H567, C665, and H669 each contribute to the Zn(2+) site.

It belongs to the class-II aminoacyl-tRNA synthetase family. Zn(2+) serves as cofactor.

It localises to the cytoplasm. The catalysed reaction is tRNA(Ala) + L-alanine + ATP = L-alanyl-tRNA(Ala) + AMP + diphosphate. In terms of biological role, catalyzes the attachment of alanine to tRNA(Ala) in a two-step reaction: alanine is first activated by ATP to form Ala-AMP and then transferred to the acceptor end of tRNA(Ala). Also edits incorrectly charged Ser-tRNA(Ala) and Gly-tRNA(Ala) via its editing domain. In Vibrio cholerae serotype O1 (strain ATCC 39541 / Classical Ogawa 395 / O395), this protein is Alanine--tRNA ligase.